A 95-amino-acid chain; its full sequence is UPF0473 protein CD630_12860 (95 aa).

It belongs to the UPF0473 family.

This chain is UPF0473 protein CD630_12860, found in Clostridioides difficile (strain 630) (Peptoclostridium difficile).